A 337-amino-acid polypeptide reads, in one-letter code: Glutathione transferase 3 (337 aa).

Residues 1–239 (MPTKSTFSRW…NKYQYTLDFC (239 aa)) are Cytoplasmic-facing. Ser66, Ser72, Ser99, and Ser116 each carry phosphoserine. Positions 66-95 (SMTVDQSKDERNEYGSGSGNGSGSGSCDTA) are disordered. Residues 107-132 (KEDDDEKPQSGDETSATKPLSSRNAN) are disordered. A compositionally biased stretch (polar residues) spans 117–132 (GDETSATKPLSSRNAN). Residues 240–260 (LPILTWLLFFRGIPTLVSYYI) form a helical membrane-spanning segment. Topologically, residues 261 to 313 (NFIRYDLNIELDPMTFNLTKFLISLAIFKTCNNKNIDFHSFRCVNQLWTQLCT) are perinuclear space. The helical transmembrane segment at 314 to 336 (VNRSLGMVPLVFSMVSCLLTLYV) threads the bilayer. Residue Leu337 is a topological domain, cytoplasmic.

It localises to the nucleus membrane. The sequence is that of Glutathione transferase 3 (GTT3) from Saccharomyces cerevisiae (strain ATCC 204508 / S288c) (Baker's yeast).